Here is a 36-residue protein sequence, read N- to C-terminus: Peptide POLARIS (36 aa).

This sequence belongs to the POLARIS peptide family. As to expression, mostly expressed in the embryonic root from the heart stage and in the seedling primary and lateral root tips, especially in the columella initials and lateral root cap. Also detectable in aerial parts of the seedling, sepals and leaves, principally in vascular tissues of the lamina and petiole.

Its function is as follows. Required for correct root growth and vascular development, probably by modulating both cell division rate in meristems and cell elongation in roots. Negative regulator of the ethylene signaling pathway that modulates microtubule cytoskeleton dynamics and auxin transport and homeostasis, and possibly cytokinin signaling, thus influencing root growth and lateral root development. The sequence is that of Peptide POLARIS (PLS) from Arabidopsis thaliana (Mouse-ear cress).